The chain runs to 245 residues: tRNA (guanine-N(7)-)-methyltransferase (245 aa).

Residues Gly-70, 93–94 (EI), 126–127 (NA), and Leu-146 contribute to the S-adenosyl-L-methionine site. Asp-149 is a catalytic residue. 224-226 (SEE) is an S-adenosyl-L-methionine binding site.

The protein belongs to the class I-like SAM-binding methyltransferase superfamily. TrmB family.

The protein resides in the nucleus. The catalysed reaction is guanosine(46) in tRNA + S-adenosyl-L-methionine = N(7)-methylguanosine(46) in tRNA + S-adenosyl-L-homocysteine. The protein operates within tRNA modification; N(7)-methylguanine-tRNA biosynthesis. Functionally, catalyzes the formation of N(7)-methylguanine at position 46 (m7G46) in tRNA. The sequence is that of tRNA (guanine-N(7)-)-methyltransferase from Aedes aegypti (Yellowfever mosquito).